The sequence spans 217 residues: KH domain-containing protein 3 (217 aa).

Residues 1–40 (MDAPRRFPTLVQLMQPKAMPVEVLGHLPKRFSWFHSEFLK) are involved in RNA binding. The region spanning 40–103 (KNPKVVRLEV…SYQEDTIKMI (64 aa)) is the KH; atypical domain. Residues 129 to 217 (QKAETQRSSI…EDARDPVTRL (89 aa)) form a disordered region. The span at 138 to 155 (IEVREAGTQRSVEVREAG) shows a compositional bias: basic and acidic residues. Phosphothreonine; by ATM occurs at positions 145 and 156. 2 stretches are compositionally biased toward polar residues: residues 156 to 170 (TQRS…TQGS) and 177 to 194 (AGTQ…TQRS). S182 is subject to Phosphoserine. Positions 205–217 (RFREDARDPVTRL) are enriched in basic and acidic residues.

This sequence belongs to the KHDC1 family. In terms of assembly, component of the subcortical maternal complex (SCMC), at least composed of NLRP5, KHDC3L, OOEP, and TLE6 isoform 1. Within the complex, interacts with NLRP5, KHDC3L and TLE6 isoform 1. The SCMC may facilitate translocation of its components between the nuclear and cytoplasmic compartments. Forms a scaffold complex with OOEP/FLOPED, and interacts with BLM and TRIM25 at DNA replication forks. Interacts with PARP1; the interaction is increased following the formation of DNA double-strand breaks. Interacts with NUMA1. As to expression, expression appears to be maximal in germinal vesicle oocytes, it tails off through metaphase II oocytes and is undetectable following the completion of the oocyte to embryo transition.

It is found in the cytoplasm. It localises to the cell cortex. The protein localises to the nucleus. The protein resides in the mitochondrion. Its subcellular location is the cytoskeleton. It is found in the microtubule organizing center. It localises to the centrosome. The protein localises to the chromosome. In terms of biological role, component of the subcortical maternal complex (SCMC), a multiprotein complex that plays a key role in early embryonic development. The SCMC complex is a structural constituent of cytoplasmic lattices, which consist in fibrous structures found in the cytoplasm of oocytes and preimplantation embryos. They are required to store maternal proteins critical for embryonic development, such as proteins that control epigenetic reprogramming of the preimplantation embryo, and prevent their degradation or activation. KHDC3 ensures proper spindle assembly by regulating the localization of AURKA via RHOA signaling and of PLK1 via a RHOA-independent process. Required for the localization of MAD2L1 to kinetochores to enable spindle assembly checkpoint function. As part of the OOEP-KHDC3 scaffold, recruits BLM and TRIM25 to DNA replication forks, thereby promoting the ubiquitination of BLM by TRIM25, enhancing BLM retainment at replication forks and therefore promoting stalled replication fork restart. Regulates homologous recombination-mediated DNA repair via recruitment of RAD51 to sites of DNA double-strand breaks, and sustainment of PARP1 activity, which in turn modulates downstream ATM or ATR activation. Activation of ATM or ATR in response to DNA double-strand breaks may be cell-type specific. Its role in DNA double-strand break repair is independent of its role in restarting stalled replication forks. Promotes neural stem cell neurogenesis and neuronal differentiation in the hippocampus. May regulate normal development of learning, memory and anxiety. Capable of binding RNA. This Homo sapiens (Human) protein is KH domain-containing protein 3.